Reading from the N-terminus, the 41-residue chain is Putative toxic protein TimP (41 aa).

A membrane pass occupies residues 1 to 17 (MKIRCFCIVLIVSGALL).

It belongs to the TimP toxin family.

It localises to the cell inner membrane. Functionally, putative toxic component of a potential type I toxin-antitoxin (TA) system. Neutralized by sRNA antitoxin TimR which binds to the 5' UTR of timP mRNA and inhibits translation. The antitoxin gene is encoded immediately upstream and transcribed divergently from the toxin gene; antitoxin RNA is less stable than timP mRNA. The chain is Putative toxic protein TimP from Escherichia coli (strain K12).